Here is a 267-residue protein sequence, read N- to C-terminus: Small ribosomal subunit protein uS2 (267 aa).

Residues 1-72 (MSGNEKEGLD…QLDEDVMPDE (72 aa)) are disordered. Acidic residues predominate over residues 10-72 (DASDSDFDPS…QLDEDVMPDE (63 aa)).

It belongs to the universal ribosomal protein uS2 family. Post-translationally, the N-terminus is blocked.

The polypeptide is Small ribosomal subunit protein uS2 (rps2) (Haloarcula marismortui (strain ATCC 43049 / DSM 3752 / JCM 8966 / VKM B-1809) (Halobacterium marismortui)).